The primary structure comprises 548 residues: Chaperonin GroEL 2 (548 aa).

Residues 29 to 32 (TLGP), 86 to 90 (DGTTT), glycine 418, 482 to 484 (NAA), and aspartate 498 contribute to the ATP site.

Belongs to the chaperonin (HSP60) family. In terms of assembly, forms a cylinder of 14 subunits composed of two heptameric rings stacked back-to-back. Interacts with the co-chaperonin GroES.

The protein resides in the cytoplasm. It catalyses the reaction ATP + H2O + a folded polypeptide = ADP + phosphate + an unfolded polypeptide.. Its function is as follows. Together with its co-chaperonin GroES, plays an essential role in assisting protein folding. The GroEL-GroES system forms a nano-cage that allows encapsulation of the non-native substrate proteins and provides a physical environment optimized to promote and accelerate protein folding. This chain is Chaperonin GroEL 2, found in Corynebacterium glutamicum (strain ATCC 13032 / DSM 20300 / JCM 1318 / BCRC 11384 / CCUG 27702 / LMG 3730 / NBRC 12168 / NCIMB 10025 / NRRL B-2784 / 534).